A 245-amino-acid chain; its full sequence is tRNA pseudouridine synthase A (245 aa).

D52 functions as the Nucleophile in the catalytic mechanism. Y110 provides a ligand contact to substrate.

This sequence belongs to the tRNA pseudouridine synthase TruA family. In terms of assembly, homodimer.

It catalyses the reaction uridine(38/39/40) in tRNA = pseudouridine(38/39/40) in tRNA. Functionally, formation of pseudouridine at positions 38, 39 and 40 in the anticodon stem and loop of transfer RNAs. In Pseudothermotoga lettingae (strain ATCC BAA-301 / DSM 14385 / NBRC 107922 / TMO) (Thermotoga lettingae), this protein is tRNA pseudouridine synthase A.